We begin with the raw amino-acid sequence, 142 residues long: Transcriptional regulator MraZ (142 aa).

SpoVT-AbrB domains follow at residues 5 to 47 (THSP…SERE) and 76 to 119 (ASDE…DAQA).

It belongs to the MraZ family. Forms oligomers.

The protein resides in the cytoplasm. The protein localises to the nucleoid. This chain is Transcriptional regulator MraZ, found in Arthrobacter sp. (strain FB24).